The following is a 316-amino-acid chain: ATP synthase gamma chain (316 aa).

It belongs to the ATPase gamma chain family. In terms of assembly, F-type ATPases have 2 components, CF(1) - the catalytic core - and CF(0) - the membrane proton channel. CF(1) has five subunits: alpha(3), beta(3), gamma(1), delta(1), epsilon(1). CF(0) has three main subunits: a, b and c.

The protein localises to the cellular thylakoid membrane. Functionally, produces ATP from ADP in the presence of a proton gradient across the membrane. The gamma chain is believed to be important in regulating ATPase activity and the flow of protons through the CF(0) complex. In Synechococcus sp. (strain WH7803), this protein is ATP synthase gamma chain.